Reading from the N-terminus, the 3174-residue chain is Probable polyketide synthase 15 (3174 aa).

The Ketosynthase family 3 (KS3) domain occupies 23–474 (NDEIAIVGIG…GSNCCLILSQ (452 aa)). Active-site for beta-ketoacyl synthase activity residues include C194, H342, and H397. Coiled coils occupy residues 472–509 (LSQF…QYDN) and 574–604 (EFNK…RVQT). The segment covering 578–599 (QKQSQKEKEKEKEREGEEKEQL) has biased composition (basic and acidic residues). The tract at residues 578–601 (QKQSQKEKEKEKEREGEEKEQLNR) is disordered. Residues 707–740 (GIEASFIVGHSLGEIPAAYCSGMITLDTLCYLIY) form an acyl/malonyl transferase region. The active-site For acyl/malonyl transferase activity is S717. Residues 1034 to 1156 (IDILGLSNYD…ANFQLLNNNN (123 aa)) form an N-terminal hotdog fold region. A PKS/mFAS DH domain is found at 1034–1332 (IDILGLSNYD…CKSLKIVKNP (299 aa)). H1068 functions as the Proton acceptor; for dehydratase activity in the catalytic mechanism. Positions 1182–1332 (NKTKISRIDL…CKSLKIVKNP (151 aa)) are C-terminal hotdog fold. The Proton donor; for dehydratase activity role is filled by D1241. Positions 1758-1793 (LEININNNNNNNNNNNNNNNNNNNNNNNNNNYEDNV) form a coiled coil. The Carrier domain maps to 2653 to 2730 (VDSLNIKDIF…LVIKIIITAI (78 aa)). Residue S2690 is modified to O-(pantetheine 4'-phosphoryl)serine.

Pantetheine 4'-phosphate is required as a cofactor.

In terms of biological role, probable polyketide synthase. The chain is Probable polyketide synthase 15 (pks15) from Dictyostelium discoideum (Social amoeba).